A 422-amino-acid polypeptide reads, in one-letter code: UDP-N-acetylglucosamine 1-carboxyvinyltransferase (422 aa).

22-23 (KN) contacts phosphoenolpyruvate. Arginine 93 contacts UDP-N-acetyl-alpha-D-glucosamine. Cysteine 117 serves as the catalytic Proton donor. Residue cysteine 117 is modified to 2-(S-cysteinyl)pyruvic acid O-phosphothioketal. Residues 122-126 (RPVDL), 162-165 (KVSV), aspartate 307, and isoleucine 329 each bind UDP-N-acetyl-alpha-D-glucosamine.

It belongs to the EPSP synthase family. MurA subfamily.

The protein localises to the cytoplasm. The enzyme catalyses phosphoenolpyruvate + UDP-N-acetyl-alpha-D-glucosamine = UDP-N-acetyl-3-O-(1-carboxyvinyl)-alpha-D-glucosamine + phosphate. Its pathway is cell wall biogenesis; peptidoglycan biosynthesis. Functionally, cell wall formation. Adds enolpyruvyl to UDP-N-acetylglucosamine. The sequence is that of UDP-N-acetylglucosamine 1-carboxyvinyltransferase from Hamiltonella defensa subsp. Acyrthosiphon pisum (strain 5AT).